The primary structure comprises 721 residues: MSDSSVREKNDNFRGYRKRGRQELRKIKRSSARTEGGSTETLEDVAEDIDHRSDEDEVSDVDSGDDFDIEDEEGKKEKVYDALLTILKSEHPEPKRRRREADESNKAPAEVGEDEHENTEHGPVDDQLEIENGLLGNHEDDNDDDSSGDEKDIDSEDEQDPFESHFNQVPEKFVDKLSNAFKTKSVKYKSVKGSLSDSESYIYAKPVVIGEEALVESPYRSSSIYSYFLKQRLKVQNGLLDKKTDPLTALQKKLVDPMFQYKDILYEYDSYEKDEDEYRDLYALHVLNHIYKTRDRILKNNQRLQDNPDTEHLDQGFTRPKVLIVVPTREVAYRVVDKIISKSGIDQVDKKGKFYDQFRDDSLPPKSKPKSFQHIFRGNTNDFFVVGLKFTRKAIKLYSNFYQSDIIVCSPLGIQMILENTDKKKRQDDFLSSIELMVIDQLHSIEYQNISHIFTIFDHLNKIPDQQHEADFSRIRMWYINEQAKLFRQTMVFTKYISPAANSLINGRCRNMAGRWKNHKVIGSENSSIGQSGLKIRQIFQRFDIIGNSIIEEPDYRFKFFTSVIIPGIVKSTGYEDGILIYIPDYTDFIRIRNYMKEKTTILFGDINEYSSQRQLNANRSLFQQGRLKVMLYTERLHHYRRYEIKGVKSVVFYKPPNNPEFYNEVVRFIGKNAFLGNTDLNISTVRCIYSKLDGLSLERIVGTKRAAVLSHAQKEIYEFK.

The segment covering 1 to 14 has biased composition (basic and acidic residues); that stretch reads MSDSSVREKNDNFR. Positions 1-168 are disordered; the sequence is MSDSSVREKN…QDPFESHFNQ (168 aa). The segment covering 15-31 has biased composition (basic residues); sequence GYRKRGRQELRKIKRSS. Phosphoserine occurs at positions 53 and 63. Acidic residues predominate over residues 55–72; sequence EDEVSDVDSGDDFDIEDE. The span at 88–105 shows a compositional bias: basic and acidic residues; it reads KSEHPEPKRRRREADESN. A compositionally biased stretch (acidic residues) spans 140–161; that stretch reads DDNDDDSSGDEKDIDSEDEQDP. Ser-196 carries the phosphoserine modification.

This sequence belongs to the UTP25 family. In terms of assembly, interacts with snoRNA U3. Interacts with MPP10, NOP19, RRP9, UTP8 and UTP18. Component of the ribosomal small subunit (SSU) processome composed of at least 40 protein subunits and snoRNA U3.

It is found in the nucleus. It localises to the nucleolus. In terms of biological role, DEAD-box RNA helicase-like protein required for pre-18S rRNA processing, specifically at sites A0, A1, and A2. This chain is U3 small nucleolar RNA-associated protein 25 (UTP25), found in Saccharomyces cerevisiae (strain ATCC 204508 / S288c) (Baker's yeast).